Here is a 761-residue protein sequence, read N- to C-terminus: MNTKLTKIISGLFVATAAFQTASAGNITDIKVSSLPNKQKIVKVSFDKEIVNPTGFVTSSPARIALDFEQTGISMDQQVLEYADPLLSKISAAQNSSRARLVLNLNKPGQYNTEVRGNKVWIFINESDDTVSAPARPAVKAAPAAPAKQQAAAPSTKSAVSVSKPFTPAKQQAAAPFTESVVSVSAPFSPAKQQAAASAKQQTAAPAKQQAATPAKQTNIDFRKDGKNAGIIELAALGFAGQPDISQQHDHIIVTLKNHTLPTTLQRSLDVADFKTPVQKVTLKRLNNDTQLIITTAGNWELVNKSAAPGYFTFQVLPKKQNLESGGVNNAPKTFTGRKISLDFQDVEIRTILQILAKESGMNIVASDSVNGKMTLSLKDVPWDQALDLVMQARNLDMRQQGNIVNIAPRDELLAKDKAFLQAEKDIADLGALYSQNFQLKYKNVEEFRSILRLDNADTTGNRNTLVSGRGSVLIDPATNTLIVTDTRSVIEKFRKLIDELDVPAQQVMIEARIVEAADGFSRDLGVKFGATGKKKLKNDTSAFGWGVNSGFGGDDKWGAETKINLPITAAANSISLVRAISSGALNLELSASESLSKTKTLANPRVLTQNRKEAKIESGYEIPFTVTSIANGGSSTNTELKKAVLGLTVTPNITPDGQIIMTVKINKDSPAQCASGNQTILCISTKNLNTQAMVENGGTLIVGGIYEEDNGNTLTKVPLLGDIPVIGNLFKTRGKKTDRRELLIFITPRIMGTAGNSLRY.

An N-terminal signal peptide occupies residues 1 to 24 (MNTKLTKIISGLFVATAAFQTASA). Low complexity-rich tracts occupy residues 135-154 (ARPA…AAAP) and 193-218 (QQAA…AKQT). 2 disordered regions span residues 135–157 (ARPA…PSTK) and 193–221 (QQAA…TNID).

Belongs to the bacterial secretin family. PilQ subfamily. Homododecamer. Tetramer of trimer.

Its subcellular location is the cell outer membrane. Required for type IV pilus biogenesis and competence. Could function as a pore for exit of the pilus but also as a channel for entry of heme and antimicrobial agents and uptake of transforming DNA. This is Type IV pilus biogenesis and competence protein PilQ (pilQ) from Neisseria meningitidis serogroup A / serotype 4A (strain DSM 15465 / Z2491).